Reading from the N-terminus, the 108-residue chain is Nucleoid-associated protein Bpet3552 (108 aa).

This sequence belongs to the YbaB/EbfC family. In terms of assembly, homodimer.

It is found in the cytoplasm. The protein localises to the nucleoid. Binds to DNA and alters its conformation. May be involved in regulation of gene expression, nucleoid organization and DNA protection. This is Nucleoid-associated protein Bpet3552 from Bordetella petrii (strain ATCC BAA-461 / DSM 12804 / CCUG 43448).